The following is a 90-amino-acid chain: Small ribosomal subunit protein uS15 (90 aa).

The protein belongs to the universal ribosomal protein uS15 family. As to quaternary structure, part of the 30S ribosomal subunit. Forms a bridge to the 50S subunit in the 70S ribosome, contacting the 23S rRNA.

One of the primary rRNA binding proteins, it binds directly to 16S rRNA where it helps nucleate assembly of the platform of the 30S subunit by binding and bridging several RNA helices of the 16S rRNA. In terms of biological role, forms an intersubunit bridge (bridge B4) with the 23S rRNA of the 50S subunit in the ribosome. In Mycoplasmoides gallisepticum (strain R(low / passage 15 / clone 2)) (Mycoplasma gallisepticum), this protein is Small ribosomal subunit protein uS15.